Here is a 116-residue protein sequence, read N- to C-terminus: Flagellar transcriptional regulator FlhD (116 aa).

It belongs to the FlhD family. Homodimer; disulfide-linked. Forms a heterohexamer composed of two FlhC and four FlhD subunits. Each FlhC binds a FlhD dimer, forming a heterotrimer, and a hexamer assembles by dimerization of two heterotrimers.

Its subcellular location is the cytoplasm. Its function is as follows. Functions in complex with FlhC as a master transcriptional regulator that regulates transcription of several flagellar and non-flagellar operons by binding to their promoter region. Activates expression of class 2 flagellar genes, including fliA, which is a flagellum-specific sigma factor that turns on the class 3 genes. Also regulates genes whose products function in a variety of physiological pathways. This is Flagellar transcriptional regulator FlhD from Yersinia pseudotuberculosis serotype O:1b (strain IP 31758).